Here is a 729-residue protein sequence, read N- to C-terminus: Fatty acid oxidation complex subunit alpha (729 aa).

The segment at 1-189 is enoyl-CoA hydratase/isomerase; the sequence is MLYQSETLQL…KIGLVDAVVD (189 aa). Residue Asp296 participates in substrate binding. The 3-hydroxyacyl-CoA dehydrogenase stretch occupies residues 311–729; it reads AAPKLAAVLG…LLDVSTNQPA (419 aa). NAD(+) contacts are provided by residues Met324, Asp343, 400 to 402, Lys407, and Ser429; that span reads VVE. The For 3-hydroxyacyl-CoA dehydrogenase activity role is filled by His450. NAD(+) is bound at residue Asn453. Substrate-binding residues include Asn500 and Tyr660.

The protein in the N-terminal section; belongs to the enoyl-CoA hydratase/isomerase family. It in the C-terminal section; belongs to the 3-hydroxyacyl-CoA dehydrogenase family. As to quaternary structure, heterotetramer of two alpha chains (FadB) and two beta chains (FadA).

It catalyses the reaction a (3S)-3-hydroxyacyl-CoA + NAD(+) = a 3-oxoacyl-CoA + NADH + H(+). The enzyme catalyses a (3S)-3-hydroxyacyl-CoA = a (2E)-enoyl-CoA + H2O. The catalysed reaction is a 4-saturated-(3S)-3-hydroxyacyl-CoA = a (3E)-enoyl-CoA + H2O. It carries out the reaction (3S)-3-hydroxybutanoyl-CoA = (3R)-3-hydroxybutanoyl-CoA. It catalyses the reaction a (3Z)-enoyl-CoA = a 4-saturated (2E)-enoyl-CoA. The enzyme catalyses a (3E)-enoyl-CoA = a 4-saturated (2E)-enoyl-CoA. Its pathway is lipid metabolism; fatty acid beta-oxidation. In terms of biological role, involved in the aerobic and anaerobic degradation of long-chain fatty acids via beta-oxidation cycle. Catalyzes the formation of 3-oxoacyl-CoA from enoyl-CoA via L-3-hydroxyacyl-CoA. It can also use D-3-hydroxyacyl-CoA and cis-3-enoyl-CoA as substrate. This Yersinia pseudotuberculosis serotype IB (strain PB1/+) protein is Fatty acid oxidation complex subunit alpha.